The primary structure comprises 89 residues: Large ribosomal subunit protein bL27 (89 aa).

Residues 1–22 (MAQKKAGGSSRNGRDSAGRRLG) form a disordered region.

It belongs to the bacterial ribosomal protein bL27 family.

This Gluconacetobacter diazotrophicus (strain ATCC 49037 / DSM 5601 / CCUG 37298 / CIP 103539 / LMG 7603 / PAl5) protein is Large ribosomal subunit protein bL27.